Consider the following 397-residue polypeptide: Aurora kinase A (397 aa).

Positions 1 to 118 (MDRCKENCVS…SIQKTEDSKK (118 aa)) are disordered. Polar residues-rich tracts occupy residues 29 to 55 (QIPS…SQRV) and 84 to 102 (RLSN…SGNN). Residues S40 and S50 each carry the phosphoserine modification. Residues 103–118 (SEKEQTSIQKTEDSKK) are compositionally biased toward basic and acidic residues. The Protein kinase domain maps to 126 to 376 (FDIGRPLGKG…LAEVLEHPWI (251 aa)). Residues K136, K155, and 203 to 206 (LEYA) each bind ATP. The Proton acceptor role is filled by D249. K251 is covalently cross-linked (Glycyl lysine isopeptide (Lys-Gly) (interchain with G-Cter in SUMO2)). ATP is bound by residues 253–254 (EN) and D267. Residues 273–286 (HAPSSRRTTLCGTL) are activation segment. Residues T280 and T281 each carry the phosphothreonine modification. S335 bears the Phosphoserine; by PKA and PAK mark. Residues 378–387 (ANSSKPPTGH) show a composition bias toward polar residues. Residues 378 to 397 (ANSSKPPTGHNSKEATSKSS) are disordered. Residues 388–397 (NSKEATSKSS) are compositionally biased toward basic and acidic residues.

This sequence belongs to the protein kinase superfamily. Ser/Thr protein kinase family. Aurora subfamily. As to quaternary structure, part of a complex composed of NEDD9, AURKA and CTTN; within the complex NEDD9 acts as a scaffold protein and is required for complex formation. Identified in a complex with AUNIP and NIN. Interacts with CPEB1, JTB, TACC1, TPX2, PPP2CA, as well as with the protein phosphatase type 1 (PP1) isoforms PPP1CA, PPP1CB and PPP1CC. Also interacts with its substrates ARHGEF2, BORA, KIF2A, PARD3, and p53/TP53. Interaction with BORA promotes phosphorylation of PLK1. Interacts with FBXL7 and CIMAP3. Interacts with GADD45A, competing with its oligomerization. Interacts (via C-terminus) with AUNIP (via C-terminus). Interacts with SIRT2. Interacts with FRY; this interaction facilitates AURKA-mediated PLK1 phosphorylation. Interacts with MYCN; interaction is phospho-independent and triggers AURKA activation; AURKA competes with FBXW7 for binding to unphosphorylated MYCN but not for binding to phosphorylated MYCN. Interacts with HNRNPU. Interacts with AAAS. Interacts with KLHL18 and CUL3. Interacts with FOXP1. Interacts with HDAC6; AURKA-mediated phosphorylation of HDAC6 promotes deacetylation of alpha-tubulin. Post-translationally, activated by phosphorylation at Thr-281; this brings about a change in the conformation of the activation segment. Phosphorylation at Thr-281 varies during the cell cycle and is highest during M phase. Autophosphorylated at Thr-281 upon TPX2 binding. Thr-281 can be phosphorylated by several kinases, including PAK and PKA. Protein phosphatase type 1 (PP1) binds AURKA and inhibits its activity by dephosphorylating Thr-281 during mitosis. Phosphorylation at Ser-335 decreases the kinase activity. PPP2CA controls degradation by dephosphorylating Ser-52 at the end of mitosis. Phosphorylated in embryonic brain neurons. In terms of processing, ubiquitinated by CHFR, leading to its degradation by the proteasome. Ubiquitinated by the anaphase-promoting complex (APC), leading to its degradation by the proteasome. Ubiquitinated by the E3 ubiquitin-protein ligase complex SCF(FBXL7) during mitosis, leading to its degradation by the proteasome. Ubiquitinated by the CUL3-KLHL18 ligase leading to its activation at the centrosome which is required for initiating mitotic entry. Ubiquitination mediated by CUL3-KLHL18 ligase does not lead to its degradation by the proteasome. In terms of tissue distribution, detected in neurons in brain cortex and hippocampus (at protein level). Expressed in mammary gland and tumor.

The protein resides in the cytoplasm. It is found in the cytoskeleton. It localises to the microtubule organizing center. The protein localises to the centrosome. Its subcellular location is the spindle pole. The protein resides in the centriole. It is found in the cell projection. It localises to the neuron projection. The protein localises to the cilium. Its subcellular location is the cilium basal body. The protein resides in the basolateral cell membrane. It carries out the reaction L-seryl-[protein] + ATP = O-phospho-L-seryl-[protein] + ADP + H(+). The enzyme catalyses L-threonyl-[protein] + ATP = O-phospho-L-threonyl-[protein] + ADP + H(+). Activation of CDK1, appears to be an upstream event of AURKA activation. Phosphatase inhibitor-2 (PPP1R2) and TPX2 act also as activators. Inactivated by the G2 checkpoint. Inhibited by GADD45A and p53/TP53, and through dephosphorylation by protein phosphatase type 1 (PP1). MLN8054 is also a potent and selective inhibitor. Activated during the early phase of cilia disassembly in the presence of FBXL7 and CIMAP3. Inhibited by the small molecule inhibitor VX-680. Mitotic serine/threonine kinase that contributes to the regulation of cell cycle progression. Associates with the centrosome and the spindle microtubules during mitosis and plays a critical role in various mitotic events including the establishment of mitotic spindle, centrosome duplication, centrosome separation as well as maturation, chromosomal alignment, spindle assembly checkpoint, and cytokinesis. Required for normal spindle positioning during mitosis and for the localization of NUMA1 and DCTN1 to the cell cortex during metaphase. Required for initial activation of CDK1 at centrosomes. Phosphorylates numerous target proteins, including ARHGEF2, BORA, BRCA1, CDC25B, DLGP5, HDAC6, KIF2A, LATS2, NDEL1, PARD3, PPP1R2, PLK1, RASSF1, TACC3, p53/TP53 and TPX2. Phosphorylates MCRS1 which is required for MCRS1-mediated kinetochore fiber assembly and mitotic progression. Regulates KIF2A tubulin depolymerase activity. Required for normal axon formation. Plays a role in microtubule remodeling during neurite extension. Important for microtubule formation and/or stabilization. Also acts as a key regulatory component of the p53/TP53 pathway, and particularly the checkpoint-response pathways critical for oncogenic transformation of cells, by phosphorylating and stabilizating p53/TP53. Phosphorylates its own inhibitors, the protein phosphatase type 1 (PP1) isoforms, to inhibit their activity. Inhibits cilia outgrowth. Required for cilia disassembly via phosphorylation of HDAC6 and subsequent deacetylation of alpha-tubulin. Regulates protein levels of the anti-apoptosis protein BIRC5 by suppressing the expression of the SCF(FBXL7) E3 ubiquitin-protein ligase substrate adapter FBXL7 through the phosphorylation of the transcription factor FOXP1. The chain is Aurora kinase A from Rattus norvegicus (Rat).